A 107-amino-acid polypeptide reads, in one-letter code: Iron-binding protein IscA (107 aa).

3 residues coordinate Fe cation: Cys-35, Cys-99, and Cys-101.

This sequence belongs to the HesB/IscA family. As to quaternary structure, homodimer; may form tetramers and higher multimers. Fe cation serves as cofactor.

Is able to transfer iron-sulfur clusters to apo-ferredoxin. Multiple cycles of [2Fe2S] cluster formation and transfer are observed, suggesting that IscA acts catalytically. Recruits intracellular free iron so as to provide iron for the assembly of transient iron-sulfur cluster in IscU in the presence of IscS, L-cysteine and the thioredoxin reductase system TrxA/TrxB. The polypeptide is Iron-binding protein IscA (Proteus mirabilis (strain HI4320)).